The primary structure comprises 106 residues: Met repressor (106 aa).

This sequence belongs to the MetJ family. In terms of assembly, homodimer.

Its subcellular location is the cytoplasm. This regulatory protein, when combined with SAM (S-adenosylmethionine) represses the expression of the methionine regulon and of enzymes involved in SAM synthesis. The chain is Met repressor from Vibrio atlanticus (strain LGP32) (Vibrio splendidus (strain Mel32)).